A 649-amino-acid chain; its full sequence is ENTH domain-containing protein C19F8.03c (649 aa).

The 135-residue stretch at 2–136 (SPSKWLLTYE…VDYAQVGDAP (135 aa)) folds into the ENTH domain. Disordered regions lie at residues 280-382 (YLQN…NELE), 409-440 (LSAE…PNDS), and 590-649 (FTHG…PFRS). S285 and S287 each carry phosphoserine. Residues 299-308 (PTLRKKKSIP) are compositionally biased toward basic residues. Composition is skewed to polar residues over residues 313–326 (ESSS…TVQQ) and 340–349 (PETQRTTSRI). Positions 352–381 (QEEEIKEEEMEGEEEEEEEEVPNYESENEL) are enriched in acidic residues. 3 stretches are compositionally biased toward polar residues: residues 409–418 (LSAEGTSASP), 614–624 (TPYTASKNPFS), and 635–649 (ARNS…PFRS). Position 414 is a phosphothreonine (T414). Residue S417 is modified to Phosphoserine.

The protein resides in the cytoplasm. The protein is ENTH domain-containing protein C19F8.03c of Schizosaccharomyces pombe (strain 972 / ATCC 24843) (Fission yeast).